Reading from the N-terminus, the 402-residue chain is GDSL esterase/lipase At1g20120 (402 aa).

The first 35 residues, 1–35, serve as a signal peptide directing secretion; sequence MLQDRVSGSLSSSKISRCVLFLSLFCFFLLTMHAS. The disordered stretch occupies residues 41 to 69; sequence RVPNPGPSPAPEPKPCPSPGPNPAPATTK. Residues 44–64 are compositionally biased toward pro residues; the sequence is NPGPSPAPEPKPCPSPGPNPA. Residue N73 is glycosylated (N-linked (GlcNAc...) asparagine). Catalysis depends on S85, which acts as the Nucleophile. 2 N-linked (GlcNAc...) asparagine glycosylation sites follow: N314 and N367. Active-site residues include D375 and H378.

Belongs to the 'GDSL' lipolytic enzyme family.

It localises to the secreted. This chain is GDSL esterase/lipase At1g20120, found in Arabidopsis thaliana (Mouse-ear cress).